Consider the following 364-residue polypeptide: Sec-independent protein translocase protein TatC (364 aa).

7 consecutive transmembrane segments (helical) span residues 42–62, 107–127, 139–159, 160–180, 194–214, 225–245, and 246–266; these read IALL…PRIF, MIAA…SFIT, LTFV…AYLT, LSTG…SVLD, IFGL…AGIV, PEIF…DPFT, and MLAL…IGWL. Residues 277-364 form a disordered region; sequence TSPYADLDDD…STDVTHGDIT (88 aa). Positions 282–295 are enriched in acidic residues; sequence DLDDDETSPLDFDD. Positions 301–320 are enriched in low complexity; it reads AASAGPAATATSPGTANPPG. Over residues 324–344 the composition is skewed to polar residues; the sequence is PPGTANPVGTANPVGTGSSTP.

Belongs to the TatC family. In terms of assembly, the Tat system comprises two distinct complexes: a TatABC complex, containing multiple copies of TatA, TatB and TatC subunits, and a separate TatA complex, containing only TatA subunits. Substrates initially bind to the TatABC complex, which probably triggers association of the separate TatA complex to form the active translocon.

It is found in the cell membrane. Functionally, part of the twin-arginine translocation (Tat) system that transports large folded proteins containing a characteristic twin-arginine motif in their signal peptide across membranes. Together with TatB, TatC is part of a receptor directly interacting with Tat signal peptides. The protein is Sec-independent protein translocase protein TatC of Frankia casuarinae (strain DSM 45818 / CECT 9043 / HFP020203 / CcI3).